We begin with the raw amino-acid sequence, 541 residues long: Membrane protein insertase YidC (541 aa).

5 helical membrane passes run 6–26 (FFLI…WEIT), 356–376 (IIHS…LAFY), 430–450 (LPIL…LEMV), 463–483 (LSAP…MFIQ), and 498–518 (IMMA…SGLV).

This sequence belongs to the OXA1/ALB3/YidC family. Type 1 subfamily. In terms of assembly, interacts with the Sec translocase complex via SecD. Specifically interacts with transmembrane segments of nascent integral membrane proteins during membrane integration.

It is found in the cell inner membrane. Its function is as follows. Required for the insertion and/or proper folding and/or complex formation of integral membrane proteins into the membrane. Involved in integration of membrane proteins that insert both dependently and independently of the Sec translocase complex, as well as at least some lipoproteins. Aids folding of multispanning membrane proteins. The polypeptide is Membrane protein insertase YidC (Vesicomyosocius okutanii subsp. Calyptogena okutanii (strain HA)).